The primary structure comprises 433 residues: SPI-2 type 3 secretion system ATPase (433 aa).

165 to 170 (GVGKST) provides a ligand contact to ATP.

The protein belongs to the ATPase alpha/beta chains family. T3SS ATPase subfamily. The core secretion machinery of the T3SS is composed of approximately 20 different proteins, including cytoplasmic components, a base, an export apparatus and a needle. This subunit is part of the cytosolic complex. Forms homohexamers. Forms a complex with SsaK/SctL (stator protein) and SsaQ/SctQ (the major sorting platform component). Interacts with the T3SS-2 specific chaperones SsaE, SseA, SscA, SscB, and SrcA.

It is found in the cytoplasm. It carries out the reaction ATP + H2O + cellular proteinSide 1 = ADP + phosphate + cellular proteinSide 2.. Its function is as follows. ATPase component of the type III secretion system (T3SS), also called injectisome, which is used to inject bacterial effector proteins into eukaryotic host cells. Acts as a molecular motor to provide the energy that is required for the export of proteins. Required for type III secretion apparatus (T3SA) formation, secretion of a subset of SPI-2 effectors and virulence. May play a critical role in T3SS substrate recognition, disassembly of the effector/chaperone complex and unfolding of the effector in an ATP-dependent manner prior to secretion. Releases the effector protein SseB from the T3SS-2 specific chaperone SsaE in an ATP-dependent manner. The protein is SPI-2 type 3 secretion system ATPase of Salmonella typhimurium (strain LT2 / SGSC1412 / ATCC 700720).